The chain runs to 341 residues: Dihydroorotate dehydrogenase (quinone) (341 aa).

FMN contacts are provided by residues 62–66 (AGMDK) and Thr-86. Substrate is bound at residue Lys-66. 111–115 (NRMGF) contacts substrate. FMN contacts are provided by Asn-139 and Asn-172. Asn-172 contributes to the substrate binding site. The active-site Nucleophile is the Ser-175. Asn-177 is a substrate binding site. FMN is bound by residues Lys-217 and Thr-245. Substrate is bound at residue 246 to 247 (NT). FMN contacts are provided by residues Gly-268, Gly-297, and 318-319 (YS).

This sequence belongs to the dihydroorotate dehydrogenase family. Type 2 subfamily. Monomer. It depends on FMN as a cofactor.

Its subcellular location is the cell membrane. It catalyses the reaction (S)-dihydroorotate + a quinone = orotate + a quinol. Its pathway is pyrimidine metabolism; UMP biosynthesis via de novo pathway; orotate from (S)-dihydroorotate (quinone route): step 1/1. Catalyzes the conversion of dihydroorotate to orotate with quinone as electron acceptor. This is Dihydroorotate dehydrogenase (quinone) from Shewanella loihica (strain ATCC BAA-1088 / PV-4).